Here is a 250-residue protein sequence, read N- to C-terminus: Probable 2' cyclic ADP-D-ribose synthase TcpB (250 aa).

Residues 1 to 46 (MSKEKQAQSKAHKAQQAISSAKSLSTQKSKMSELERATRDGAAIGK) are disordered. Residues 1 to 117 (MSKEKQAQSK…TASATMEAEE (117 aa)) are necessary and sufficient for phosphoinositide binding. Residues 14–23 (AQQAISSAKS) show a composition bias toward low complexity. The segment covering 30-39 (KMSELERATR) has biased composition (basic and acidic residues). Residues 117–250 (EEYDFFISHA…EIAKELHSLI (134 aa)) enclose the TIR domain. Residue Glu192 is part of the active site.

In terms of assembly, homodimer; may also form oligomers. Interacts with host TIRAP. Interacts with host MYD88. Interaction with host MYD88 was not confirmed by another study. Interacts with host TLR4. Abolishes the interaction of host TIRAP with TLR4.

It is found in the secreted. Its subcellular location is the host cell membrane. The catalysed reaction is NAD(+) + H2O = ADP-D-ribose + nicotinamide + H(+). The enzyme catalyses NAD(+) = 2'cADPR + nicotinamide + H(+). Virulence factor that interferes with host Toll-like receptor 2 (TLR2) and TLR4 signaling, resulting in the reduction of dendritic cell maturation, inhibition of pro-inflammatory cytokine secretion and impaired NF-kappa-B activation in macrophages. Interferes with host TLR4 signaling by abolishing host TLR4-TIRAP interaction (but not host TIRAP-MYD88 interaction) and its downstream signaling. Inhibits host TLR 2 induced NF-kappa-B activation and TNF (tumor necrosis factor) secretion. Binds phosphoinositide (PtdIns) via its N-terminal domain. Has NAD(+) hydrolase (NADase) activity, catalyzes cleavage of NAD(+) into ADP-D-ribose (ADPR) and nicotinamide. Also generates a cyclization variant of cyclic ADPR (cADPR), termed v-cADPR (probably 2'cADPR). The polypeptide is Probable 2' cyclic ADP-D-ribose synthase TcpB (Brucella melitensis biotype 1 (strain ATCC 23456 / CCUG 17765 / NCTC 10094 / 16M)).